Reading from the N-terminus, the 275-residue chain is uncharacterized protein (275 aa).

The region spanning 171–268 (KMVCEFLEEH…GLTPKQYMKI (98 aa)) is the HTH araC/xylS-type domain. DNA-binding regions (H-T-H motif) lie at residues 188–209 (NDLS…TKQK) and 235–258 (PIDA…KRQV).

This is an uncharacterized protein from Bacillus subtilis (strain 168).